A 372-amino-acid polypeptide reads, in one-letter code: Cyanuric acid amidohydrolase (372 aa).

Residues 1–105 (MPTTLRRAHV…IVFEAREVDE (105 aa)) are RU A. Substrate contacts are provided by residues R56 and 84-85 (SG). Positions 115–252 (SLALGRARTP…HEIMVAGMSR (138 aa)) are RU B. K165 is an active-site residue. Substrate is bound by residues R197 and 235-236 (SG). S235 serves as the catalytic Nucleophile. The RU C stretch occupies residues 258–372 (LAIDHGVMRD…GPVAIIVERT (115 aa)). E305 is a binding site for Mg(2+). Residues R332 and 351–352 (SG) each bind substrate. The Mg(2+) site is built by A354, Q357, G358, P359, and G362.

The protein belongs to the cyclic amide hydrolase (CyAH) family. Homotetramer.

The enzyme catalyses cyanurate + H2O = 1-carboxybiuret + H(+). The protein operates within xenobiotic degradation; atrazine degradation; biuret from cyanurate: step 1/1. With respect to regulation, inhibited by barbituric acid. Its function is as follows. Responsible for the hydrolysis of cyanuric acid, an intermediate formed during catabolism of s-triazine based compounds in herbicides such as atrazine and polymers such as melamine. Catalyzes the hydrolytic opening of the s-triazine ring of cyanuric acid (2,4,6-trihydroxy-s-triazine) to yield carbon dioxide and carboxybiuret, which spontaneously decarboxylates to biuret. This chain is Cyanuric acid amidohydrolase, found in Bradyrhizobium sp. (strain ORS 375).